Here is a 503-residue protein sequence, read N- to C-terminus: Glutamate--tRNA ligase (503 aa).

Residues 9-19 (PSPTGDPHVGT) carry the 'HIGH' region motif. A 'KMSKS' region motif is present at residues 251 to 255 (KLSKR). Residue Lys254 coordinates ATP.

The protein belongs to the class-I aminoacyl-tRNA synthetase family. Glutamate--tRNA ligase type 1 subfamily. As to quaternary structure, monomer.

It is found in the cytoplasm. It carries out the reaction tRNA(Glu) + L-glutamate + ATP = L-glutamyl-tRNA(Glu) + AMP + diphosphate. In terms of biological role, catalyzes the attachment of glutamate to tRNA(Glu) in a two-step reaction: glutamate is first activated by ATP to form Glu-AMP and then transferred to the acceptor end of tRNA(Glu). This is Glutamate--tRNA ligase from Saccharophagus degradans (strain 2-40 / ATCC 43961 / DSM 17024).